The chain runs to 327 residues: DNA primase large subunit PriL (327 aa).

Positions 218, 290, 299, and 307 each coordinate [4Fe-4S] cluster.

The protein belongs to the eukaryotic-type primase large subunit family. In terms of assembly, heterodimer of a small subunit (PriS) and a large subunit (PriL). [4Fe-4S] cluster is required as a cofactor.

Regulatory subunit of DNA primase, an RNA polymerase that catalyzes the synthesis of short RNA molecules used as primers for DNA polymerase during DNA replication. Stabilizes and modulates the activity of the small subunit, increasing the rate of DNA synthesis, and conferring RNA synthesis capability. The DNA polymerase activity may enable DNA primase to also catalyze primer extension after primer synthesis. May also play a role in DNA repair. The sequence is that of DNA primase large subunit PriL from Thermoplasma volcanium (strain ATCC 51530 / DSM 4299 / JCM 9571 / NBRC 15438 / GSS1).